The sequence spans 248 residues: Serine/arginine-rich splicing factor 1 (248 aa).

Ser2 is modified (N-acetylserine). Ser2 carries the phosphoserine modification. One can recognise an RRM 1 domain in the interval 16-91; the sequence is CRIYVGNLPP…YRLRVEFPRS (76 aa). Lys30 participates in a covalent cross-link: Glycyl lysine isopeptide (Lys-Gly) (interchain with G-Cter in SUMO2). N6-acetyllysine; alternate is present on Lys38. A Glycyl lysine isopeptide (Lys-Gly) (interchain with G-Cter in SUMO2); alternate cross-link involves residue Lys38. The interval 88–134 is disordered; the sequence is FPRSGRGTGRGGGGGGGGGAPRGRYGPPSRRSENRVVVSGLPPSGSW. Asymmetric dimethylarginine; alternate is present on residues Arg93, Arg97, and Arg109. Arg93, Arg97, and Arg109 each carry omega-N-methylarginine; alternate. The segment covering 93–108 has biased composition (gly residues); it reads RGTGRGGGGGGGGGAP. The residue at position 111 (Arg111) is an Omega-N-methylarginine. The RRM 2 domain occupies 121 to 195; it reads NRVVVSGLPP…ETAYIRVKVD (75 aa). Ser133 bears the Phosphoserine mark. Lys179 is modified (N6-acetyllysine). Residues 191–248 form a disordered region; sequence RVKVDGPRSPSYGRSRSRSRSRSRNRSRSNSRSRSYSPRRSRGSPRYSPRHSRSRSRT. The tract at residues 198-247 is interaction with SAFB1; sequence RSPSYGRSRSRSRSRSRNRSRSNSRSRSYSPRRSRGSPRYSPRHSRSRSR. Ser199 and Ser201 each carry phosphoserine. The residue at position 202 (Tyr202) is a Phosphotyrosine. Phosphoserine is present on residues Ser205, Ser207, Ser209, Ser231, Ser234, and Ser238. The span at 205–248 shows a compositional bias: basic residues; sequence SRSRSRSRSRNRSRSNSRSRSYSPRRSRGSPRYSPRHSRSRSRT.

The protein belongs to the splicing factor SR family. In terms of assembly, consists of two polypeptides of p32 and p33. Identified in the spliceosome C complex. Component of a ribonucleoprotein complex containing mRNAs and RNA-binding proteins including DDX5, HNRNPH2 and SRSF1 as well as splicing regulator ARVCF. In vitro, self-associates and binds SRSF2, SNRNP70 and U2AF1 but not U2AF2. Binds SREK1/SFRS12. Interacts with SAFB/SAFB1. Interacts with PSIP1/LEDGF. Interacts with RSRC1 (via Arg/Ser-rich domain). Interacts with ZRSR2/U2AF1-RS2. Interacts with CCDC55 (via C-terminus). Interacts with SRPK1 and a sliding docking interaction is essential for its sequential and processive phosphorylation by SRPK1. Interacts with NXF1. Interacts with CCNL1, CCNL2 and CDK11B. Interacts with RRP1B. Interacts (when phosphorylated in its RS domain) with TNPO3; promoting nuclear import. Interacts with ILDR1 (via C-terminus) and ILDR2. In terms of processing, phosphorylated by CLK1, CLK2, CLK3 and CLK4. Phosphorylated by SRPK1 at multiple serines in its RS domain via a directional (C-terminal to N-terminal) and a dual-track mechanism incorporating both processive phosphorylation (in which the kinase stays attached to the substrate after each round of phosphorylation) and distributive phosphorylation steps (in which the kinase and substrate dissociate after each phosphorylation event). The RS domain of SRSF1 binds to a docking groove in the large lobe of the kinase domain of SRPK1 and this induces certain structural changes in SRPK1 and/or RRM 2 domain of SRSF1, allowing RRM 2 to bind the kinase and initiate phosphorylation. The cycles continue for several phosphorylation steps in a processive manner (steps 1-8) until the last few phosphorylation steps (approximately steps 9-12). During that time, a mechanical stress induces the unfolding of the beta-4 motif in RRM 2, which then docks at the docking groove of SRPK1. This also signals RRM 2 to begin to dissociate, which facilitates SRSF1 dissociation after phosphorylation is completed. Asymmetrically dimethylated at arginines, probably by PRMT1, methylation promotes localization to nuclear speckles.

Its subcellular location is the cytoplasm. The protein resides in the nucleus speckle. Plays a role in preventing exon skipping, ensuring the accuracy of splicing and regulating alternative splicing. Interacts with other spliceosomal components, via the RS domains, to form a bridge between the 5'- and 3'-splice site binding components, U1 snRNP and U2AF. Can stimulate binding of U1 snRNP to a 5'-splice site-containing pre-mRNA. Binds to purine-rich RNA sequences, either the octamer, 5'-RGAAGAAC-3' (r=A or G) or the decamers, AGGACAGAGC/AGGACGAAGC. Binds preferentially to the 5'-CGAGGCG-3' motif in vitro. Three copies of the octamer constitute a powerful splicing enhancer in vitro, the ASF/SF2 splicing enhancer (ASE) which can specifically activate ASE-dependent splicing. May function as export adapter involved in mRNA nuclear export through the TAP/NXF1 pathway. In Pongo abelii (Sumatran orangutan), this protein is Serine/arginine-rich splicing factor 1 (SRSF1).